The chain runs to 312 residues: DNA-directed RNA polymerase subunit alpha (312 aa).

Positions 1 to 226 are alpha N-terminal domain (alpha-NTD); sequence MIEFEKPNIT…EHLDIFVNLT (226 aa). The alpha C-terminal domain (alpha-CTD) stretch occupies residues 243-312; sequence KEKMLEMTIE…DLGLGLRKED (70 aa).

It belongs to the RNA polymerase alpha chain family. Homodimer. The RNAP catalytic core consists of 2 alpha, 1 beta, 1 beta' and 1 omega subunit. When a sigma factor is associated with the core the holoenzyme is formed, which can initiate transcription.

It catalyses the reaction RNA(n) + a ribonucleoside 5'-triphosphate = RNA(n+1) + diphosphate. In terms of biological role, DNA-dependent RNA polymerase catalyzes the transcription of DNA into RNA using the four ribonucleoside triphosphates as substrates. The polypeptide is DNA-directed RNA polymerase subunit alpha (Lacticaseibacillus casei (strain BL23) (Lactobacillus casei)).